Consider the following 80-residue polypeptide: Acyl carrier protein (80 aa).

One can recognise a Carrier domain in the interval K2–N77. Position 37 is an O-(pantetheine 4'-phosphoryl)serine (S37).

It belongs to the acyl carrier protein (ACP) family. 4'-phosphopantetheine is transferred from CoA to a specific serine of apo-ACP by AcpS. This modification is essential for activity because fatty acids are bound in thioester linkage to the sulfhydryl of the prosthetic group.

It is found in the cytoplasm. It functions in the pathway lipid metabolism; fatty acid biosynthesis. Carrier of the growing fatty acid chain in fatty acid biosynthesis. This chain is Acyl carrier protein, found in Buchnera aphidicola subsp. Acyrthosiphon pisum (strain 5A).